Here is a 237-residue protein sequence, read N- to C-terminus: MSSFRLDVVSLVPEVFDSLRGLGVIGRAFHAGIAELHTHNPRDYATDRYRKVDDEPYGGGAGMVLKPEPVFAAFEAIPVQPSRRVLLMTPQGKPLQQADLRRWATDYEQLVLLCGHYEGFDERIRSLADEEVSLGDFVLTGGELPAMTIINGTVRLRPGTVGTADSLVEESHSAGLLEHPHYTRPATFREMDVPAVLRSGDHGAIARWRAEQQKERTQLRRPDLWAQWQAEHPGNEG.

S-adenosyl-L-methionine-binding positions include Gly115 and 134-139 (LGDFVL).

Belongs to the RNA methyltransferase TrmD family. In terms of assembly, homodimer.

The protein resides in the cytoplasm. The catalysed reaction is guanosine(37) in tRNA + S-adenosyl-L-methionine = N(1)-methylguanosine(37) in tRNA + S-adenosyl-L-homocysteine + H(+). Functionally, specifically methylates guanosine-37 in various tRNAs. This chain is tRNA (guanine-N(1)-)-methyltransferase, found in Synechococcus sp. (strain RCC307).